A 423-amino-acid chain; its full sequence is Gamma-glutamyl phosphate reductase (423 aa).

This sequence belongs to the gamma-glutamyl phosphate reductase family.

The protein localises to the cytoplasm. The catalysed reaction is L-glutamate 5-semialdehyde + phosphate + NADP(+) = L-glutamyl 5-phosphate + NADPH + H(+). The protein operates within amino-acid biosynthesis; L-proline biosynthesis; L-glutamate 5-semialdehyde from L-glutamate: step 2/2. In terms of biological role, catalyzes the NADPH-dependent reduction of L-glutamate 5-phosphate into L-glutamate 5-semialdehyde and phosphate. The product spontaneously undergoes cyclization to form 1-pyrroline-5-carboxylate. The sequence is that of Gamma-glutamyl phosphate reductase from Burkholderia orbicola (strain AU 1054).